Here is a 449-residue protein sequence, read N- to C-terminus: Capsid protein (449 aa).

The interval 1–43 (MARRARRPRGRFYAFRRGRWHHLKRLRRRYKFRHRRRQRYRRR) is DNA-binding. Residues 6-47 (RRPRGRFYAFRRGRWHHLKRLRRRYKFRHRRRQRYRRRAFRK) are nuclear localization signals.

The protein belongs to the gyrovirus capsid protein family. Homomultimer (Potential). Interacts with Rep; this interaction relocates Rep into the nucleus.

Its subcellular location is the host nucleus. It is found in the virion. In terms of biological role, self-assembles to form the virion icosahedral capsid with a T=1 symmetry. This very small capsid (25 nm in diameter) allows the virus to be very stable in the environment and resistant to some disinfectants, including detergents. Essential for the initial attachment to host receptors. After attachment, the virus is endocytosed and traffics to the nucleus. The capsid protein binds and transports the viral genome and Rep across the nuclear envelope. The chain is Capsid protein (VP1) from Gallus gallus (Chicken).